Consider the following 473-residue polypeptide: Gamma-aminobutyric acid receptor subunit beta-3 (473 aa).

Residues 1–25 form the signal peptide; sequence MWGLAGGRLFGIFSAPVLVAVVCCA. Topologically, residues 26–246 are extracellular; sequence QSVNDPGNMS…FRLKRNIGYF (221 aa). Asparagine 33 and asparagine 105 each carry an N-linked (GlcNAc...) asparagine glycan. 120–122 contacts benzamidine; the sequence is DTY. Tyrosine 122 serves as a coordination point for 4-aminobutanoate. Histamine is bound at residue tyrosine 122. A disulfide bridge connects residues cysteine 161 and cysteine 175. A glycan (N-linked (GlcNAc...) asparagine) is linked at asparagine 174. 2 residues coordinate 4-aminobutanoate: glutamate 180 and tyrosine 182. Residues 180-182 and phenylalanine 225 each bind benzamidine; that span reads ESY. Residue 181 to 182 participates in histamine binding; that stretch reads SY. Threonine 227 serves as a coordination point for 4-aminobutanoate. Threonine 227 contributes to the histamine binding site. The helical transmembrane segment at 247–267 threads the bilayer; it reads ILQTYMPSILITILSWVSFWI. Over 268-271 the chain is Cytoplasmic; sequence NYDA. Residues 272 to 292 traverse the membrane as a helical segment; sequence SAARVALGITTVLTMTTINTH. The Extracellular segment spans residues 293–304; the sequence is LRETLPKIPYVK. A helical transmembrane segment spans residues 305–328; sequence AIDMYLMGCFVFVFLALLEYAFVN. Residues 329–447 are Cytoplasmic-facing; the sequence is YIFFGRGPQR…KIPDLTDVNA (119 aa). A helical membrane pass occupies residues 448–470; sequence IDRWSRIVFPFTFSLFNLVYWLY. The Extracellular segment spans residues 471–473; sequence YVN.

This sequence belongs to the ligand-gated ion channel (TC 1.A.9) family. Gamma-aminobutyric acid receptor (TC 1.A.9.5) subfamily. GABRB3 sub-subfamily. Heteropentamer, formed by a combination of alpha (GABRA1-6), beta (GABRB1-3), gamma (GABRG1-3), delta (GABRD), epsilon (GABRE), rho (GABRR1-3), pi (GABRP) and theta (GABRQ) chains, each subunit exhibiting distinct physiological and pharmacological properties. Can form functional homopentamers (in vitro). Interacts with UBQLN1. May interact with KIF21B. Identified in a complex of 720 kDa composed of LHFPL4, NLGN2, GABRA1, GABRB2, GABRG2 and GABRB3. Interacts with LHFPL4. Interacts with GIT1; this interaction is required for synaptic GABRB3 surface stability and inhibitory synapse strength.

The protein resides in the postsynaptic cell membrane. The protein localises to the cell membrane. It is found in the cytoplasmic vesicle membrane. It carries out the reaction chloride(in) = chloride(out). Its activity is regulated as follows. Potentiated by histamine. In terms of biological role, beta subunit of the heteropentameric ligand-gated chloride channel gated by gamma-aminobutyric acid (GABA), a major inhibitory neurotransmitter in the brain. GABA-gated chloride channels, also named GABA(A) receptors (GABAAR), consist of five subunits arranged around a central pore and contain GABA active binding site(s) located at the alpha and beta subunit interface(s). GABAARs containing beta-3/GABRB3 subunit are found at both synaptic and extrasynaptic sites. When activated by GABA, GABAARs selectively allow the flow of chloride anions across the cell membrane down their electrochemical gradient. Chloride influx into the postsynaptic neuron following GABAAR opening decreases the neuron ability to generate a new action potential, thereby reducing nerve transmission. GABAARs containing alpha-1 and beta-3 subunits exhibit synaptogenic activity; the gamma-2 subunit being necessary but not sufficient to induce rapid synaptic contacts formation. Extrasynaptic beta-3 receptors contribute to the tonic GABAergic inhibition. GABAARs containing alpha-1, beta-3 and epsilon subunits may also permit spontaneous chloride channel activity while preserving the structural information required for GABA-gated openings. Beta-containing GABAARs can simultaneously bind GABA and histamine where histamine binds at the interface of two neighboring beta subunits, which may be involved in the regulation of sleep and wakefulness. Plays an important role in somatosensation and in the production of antinociception. The polypeptide is Gamma-aminobutyric acid receptor subunit beta-3 (Homo sapiens (Human)).